Reading from the N-terminus, the 242-residue chain is Dehydration-responsive element-binding protein 1J (242 aa).

The segment covering 20-29 has biased composition (low complexity); that stretch reads SSATTAATAT. The interval 20–44 is disordered; the sequence is SSATTAATATGPASPKRPAGRTKFQ. A DNA-binding region (AP2/ERF) is located at residues 50–109; the sequence is VFRGVRRRGRAGRWVCEVRVPGSRGDRLWVGTFDTAEEAARAHDAAMLAMCGASASLNFT. The tract at residues 143 to 184 is disordered; that stretch reads FQRRGSTAATATATSGDAASTAPPSSSPVLSPNDDNASSAST. A compositionally biased stretch (low complexity) spans 148-184; that stretch reads STAATATATSGDAASTAPPSSSPVLSPNDDNASSAST.

It belongs to the AP2/ERF transcription factor family. ERF subfamily.

The protein localises to the nucleus. Its function is as follows. Transcriptional activator that binds specifically to the DNA sequence 5'-[AG]CCGAC-3'. Binding to the C-repeat/DRE element mediates high salinity- and dehydration-inducible transcription. The chain is Dehydration-responsive element-binding protein 1J (DREB1J) from Oryza sativa subsp. indica (Rice).